We begin with the raw amino-acid sequence, 382 residues long: MGDWSALGKLLDKVQAYSTAGGKVWLSVLFIFRILLLGTAVESAWGDEQSAFRCNTQQPGCENVCYDKSFPISHVRFWVLQIIFVSVPTLLYLAHVFYVMRKEEKLNKKEEELKVAQTDGVNVEMHLKQIEIKKFKYGIEEHGKVKMRGGLLRTYIISILFKSVFEVAFLLIQWYIYGFSLSAVYTCKRDPCPHQVDCFLSRPTEKTIFIIFMLVVSLVSLALNIIELFYVFFKGVKDRVKGRSDPYHATTGPLSPSKDCGSPKYAYFNGCSSPTAPLSPMSPPGYKLVTGDRNNSSCRNYNKQASEQNWANYSAEQNRMGQAGSTISNSHAQPFDFPDDNQNAKKVAAGHELQPLAIVDQRPSSRASSRASSRPRPDDLEI.

Over 2–23 the chain is Cytoplasmic; sequence GDWSALGKLLDKVQAYSTAGGK. Residue Ser-5 is modified to Phosphoserine. A helical transmembrane segment spans residues 24–44; that stretch reads VWLSVLFIFRILLLGTAVESA. Residues 45–76 are Extracellular-facing; that stretch reads WGDEQSAFRCNTQQPGCENVCYDKSFPISHVR. 2 cysteine pairs are disulfide-bonded: Cys-54–Cys-192 and Cys-187–Cys-198. A helical membrane pass occupies residues 77–97; sequence FWVLQIIFVSVPTLLYLAHVF. Topologically, residues 98–155 are cytoplasmic; that stretch reads YVMRKEEKLNKKEEELKVAQTDGVNVEMHLKQIEIKKFKYGIEEHGKVKMRGGLLRTY. Residue Lys-144 forms a Glycyl lysine isopeptide (Lys-Gly) (interchain with G-Cter in SUMO) linkage. Residues 156–176 traverse the membrane as a helical segment; sequence IISILFKSVFEVAFLLIQWYI. Residues 177 to 207 lie on the Extracellular side of the membrane; sequence YGFSLSAVYTCKRDPCPHQVDCFLSRPTEKT. The helical transmembrane segment at 208–228 threads the bilayer; that stretch reads IFIIFMLVVSLVSLALNIIEL. At 229–382 the chain is on the cytoplasmic side; it reads FYVFFKGVKD…SRPRPDDLEI (154 aa). Lys-237 is covalently cross-linked (Glycyl lysine isopeptide (Lys-Gly) (interchain with G-Cter in SUMO)). The tract at residues 244 to 382 is interaction with NOV; it reads SDPYHATTGP…SRPRPDDLEI (139 aa). A Phosphotyrosine modification is found at Tyr-247. Ser-255, Ser-257, and Ser-262 each carry phosphoserine. Positions 264 to 382 are interaction with UBQLN4; it reads KYAYFNGCSS…SRPRPDDLEI (119 aa). Cys-271 bears the S-nitrosocysteine mark. Thr-275 bears the Phosphothreonine mark. Phosphoserine is present on residues Ser-306, Ser-314, and Ser-325. Polar residues predominate over residues 317–332; the sequence is QNRMGQAGSTISNSHA. The tract at residues 317–382 is disordered; sequence QNRMGQAGST…SRPRPDDLEI (66 aa). A Phosphothreonine modification is found at Thr-326. Residues Ser-328, Ser-330, and Ser-365 each carry the phosphoserine modification. The segment covering 362-374 has biased composition (low complexity); sequence RPSSRASSRASSR. Ser-368 carries the post-translational modification Phosphoserine; by PKC/PRKCG and PKC/PRKCD. 2 positions are modified to phosphoserine: Ser-369 and Ser-373.

It belongs to the connexin family. Alpha-type (group II) subfamily. As to quaternary structure, a connexon is composed of a hexamer of connexins. Interacts with SGSM3. Interacts with RIC1/CIP150. Interacts with CNST and CSNK1D. Interacts (via C-terminus) with TJP1. Interacts (via C-terminus) with SRC (via SH3 domain). Interacts (not ubiquitinated) with UBQLN4 (via UBA domain). Interacts with NOV. Interacts with TMEM65. Interacts with ANK3/ANKG and PKP2. Post-translationally, contains at least one intramolecular disulfide bond. Phosphorylation at Ser-325, Ser-328 and Ser-330 by CK1 modulates gap junction assembly. Phosphorylated at Ser-368 by PRKCG; phosphorylation induces disassembly of gap junction plaques and inhibition of gap junction activity. Phosphorylation at Ser-368 by PRKCD triggers its internalization into small vesicles leading to proteasome-mediated degradation. In terms of processing, sumoylated with SUMO1, SUMO2 and SUMO3, which may regulate the level of functional Cx43 gap junctions at the plasma membrane. May be desumoylated by SENP1 or SENP2. Post-translationally, S-nitrosylation at Cys-271 is enriched at the muscle endothelial gap junction in arteries, it augments channel permeability and may regulate of smooth muscle cell to endothelial cell communication. Acetylated in the developing cortex; leading to delocalization from the cell membrane. Detected in ventricle and atrium (at protein level).

It localises to the cell membrane. The protein localises to the cell junction. The protein resides in the gap junction. Its subcellular location is the endoplasmic reticulum. Its function is as follows. Gap junction protein that acts as a regulator of bladder capacity. A gap junction consists of a cluster of closely packed pairs of transmembrane channels, the connexons, through which materials of low MW diffuse from one cell to a neighboring cell. Negative regulator of bladder functional capacity: acts by enhancing intercellular electrical and chemical transmission, thus sensitizing bladder muscles to cholinergic neural stimuli and causing them to contract. May play a role in cell growth inhibition through the regulation of NOV expression and localization. Plays an essential role in gap junction communication in the ventricles. The sequence is that of Gap junction alpha-1 protein (Gja1) from Rattus norvegicus (Rat).